Reading from the N-terminus, the 325-residue chain is Basic membrane protein A (325 aa).

The signal sequence occupies residues 1–3; it reads FLS. Cysteine 4 is lipidated: N-palmitoyl cysteine. Cysteine 4 carries S-diacylglycerol cysteine lipidation.

This sequence belongs to the BMP lipoprotein family. In terms of assembly, monomer.

It is found in the cell inner membrane. Its function is as follows. Immunogenic protein. May be part of an ABC-type nucleoside uptake system involved in the purine salvage pathway. The polypeptide is Basic membrane protein A (bmpA) (Borreliella afzelii (Borrelia afzelii)).